A 312-amino-acid polypeptide reads, in one-letter code: Ribosomal RNA small subunit methyltransferase H (312 aa).

Residues alanine 32 to histidine 34, aspartate 52, phenylalanine 79, aspartate 100, and glutamine 107 contribute to the S-adenosyl-L-methionine site.

The protein belongs to the methyltransferase superfamily. RsmH family.

It localises to the cytoplasm. The enzyme catalyses cytidine(1402) in 16S rRNA + S-adenosyl-L-methionine = N(4)-methylcytidine(1402) in 16S rRNA + S-adenosyl-L-homocysteine + H(+). Its function is as follows. Specifically methylates the N4 position of cytidine in position 1402 (C1402) of 16S rRNA. This is Ribosomal RNA small subunit methyltransferase H from Listeria monocytogenes serovar 1/2a (strain ATCC BAA-679 / EGD-e).